Consider the following 323-residue polypeptide: Aspartate carbamoyltransferase catalytic subunit (323 aa).

2 residues coordinate carbamoyl phosphate: arginine 68 and threonine 69. Residue lysine 96 coordinates L-aspartate. Carbamoyl phosphate contacts are provided by arginine 118, histidine 148, and glutamine 151. Residues arginine 181 and arginine 236 each coordinate L-aspartate. Residues glycine 277 and proline 278 each coordinate carbamoyl phosphate.

The protein belongs to the aspartate/ornithine carbamoyltransferase superfamily. ATCase family. As to quaternary structure, heterododecamer (2C3:3R2) of six catalytic PyrB chains organized as two trimers (C3), and six regulatory PyrI chains organized as three dimers (R2).

It carries out the reaction carbamoyl phosphate + L-aspartate = N-carbamoyl-L-aspartate + phosphate + H(+). Its pathway is pyrimidine metabolism; UMP biosynthesis via de novo pathway; (S)-dihydroorotate from bicarbonate: step 2/3. Functionally, catalyzes the condensation of carbamoyl phosphate and aspartate to form carbamoyl aspartate and inorganic phosphate, the committed step in the de novo pyrimidine nucleotide biosynthesis pathway. The chain is Aspartate carbamoyltransferase catalytic subunit from Verminephrobacter eiseniae (strain EF01-2).